The chain runs to 617 residues: tRNA uridine 5-carboxymethylaminomethyl modification enzyme MnmG (617 aa).

FAD is bound by residues 9-14, valine 120, and threonine 175; that span reads GAGHAG. Position 267-281 (267-281) interacts with NAD(+); sequence GPRYCPSIEDKVVRF. Glutamine 364 contributes to the FAD binding site.

It belongs to the MnmG family. Homodimer. Heterotetramer of two MnmE and two MnmG subunits. The cofactor is FAD.

The protein localises to the cytoplasm. Its function is as follows. NAD-binding protein involved in the addition of a carboxymethylaminomethyl (cmnm) group at the wobble position (U34) of certain tRNAs, forming tRNA-cmnm(5)s(2)U34. This Onion yellows phytoplasma (strain OY-M) protein is tRNA uridine 5-carboxymethylaminomethyl modification enzyme MnmG.